The chain runs to 339 residues: uncharacterized protein (339 aa).

Positions M1–A29 are cleaved as a signal peptide.

It belongs to the aerolysin family.

This is an uncharacterized protein from Staphylococcus aureus (strain MRSA252).